Reading from the N-terminus, the 181-residue chain is S-fimbrial protein subunit SfaA (181 aa).

Residues 1-24 form the signal peptide; the sequence is MKLKFISMAVFSALTLGVATNASA. Cysteine 44 and cysteine 84 are disulfide-bonded.

This sequence belongs to the fimbrial protein family.

It localises to the fimbrium. Fimbriae (also called pili), polar filaments radiating from the surface of the bacterium to a length of 0.5-1.5 micrometers and numbering 100-300 per cell, enable bacteria to colonize the epithelium of specific host organs. In terms of biological role, the major fimbrial subunit. Interacts with alpha-sialic acid-(2-3)-beta-Gal containing receptors. It belongs to the group of Mrh (Mannose-resistant hemagglutination) fimbrial proteins. In Escherichia coli O6:K15:H31 (strain 536 / UPEC), this protein is S-fimbrial protein subunit SfaA (sfaA).